A 745-amino-acid chain; its full sequence is Junction plakoglobin (745 aa).

Methionine 1 is subject to N-acetylmethionine. A glycan (O-linked (GlcNAc) threonine) is linked at threonine 14. 2 positions are modified to phosphoserine: serine 99 and serine 125. ARM repeat units follow at residues 132–171 (NYQDDAELATRALPELTKLLNDEDPVVVTKAAMIVNQLSK), 172–215 (KEAS…LSHH), 216–255 (REGLLAIFKSGGIPALVRMLSSPVESVLFYAITTLHNLLL), 258–297 (EGAKMAVRLADGLQKMVPLLNKNNPKFLAITTDCLQLLAY), 298–341 (GNQE…LSVC), 342–381 (PSNKPAIVEAGGMQALGKHLTSNSPRLVQNCLWTLRNLSD), 383–420 (ATKQEGLESVLKILVNQLSVDDVNVLTCATGTLSNLTC), 423–464 (SKNK…HLTS), 470–510 (EMAQ…NLAL), 512–551 (PANHAPLQEAAVIPRLVQLLVKAHQDAQRHVAAGTQQPYT), 574–613 (PMNRMEIFRLNTIPLFVQLLYSSVENIQRVAAGVLCELAQ), and 615–661 (KEAA…PDYR). Residues 132 to 297 (NYQDDAELAT…TTDCLQLLAY (166 aa)) are interaction with DSC1 and DSG1. Serine 182 is modified (phosphoserine). Positions 574–661 (PMNRMEIFRL…ISEDKNPDYR (88 aa)) are interaction with DSC1. Phosphoserine occurs at positions 665 and 730.

It belongs to the beta-catenin family. Homodimer. Component of an E-cadherin/catenin adhesion complex composed of at least E-cadherin/CDH1 and gamma-catenin/JUP, and possibly alpha-catenin/CTNNA1; the complex is located to adherens junctions. The stable association of CTNNA1 is controversial as CTNNA1 was shown not to bind to F-actin when assembled in the complex. Interacts with MUC1. Interacts with CAV1. Interacts with PTPRJ. Interacts with DSG1. Interacts with DSC1 and DSC2. Interacts with PKP2. Interacts with PKP3 (via N-terminus); the interaction is required for PKP3 localization to desmosome cell-cell junctions. Interacts with DSG4. May be phosphorylated by FER. As to expression, expressed in the mammary epithelium (at protein level).

Its subcellular location is the cell junction. It localises to the adherens junction. It is found in the desmosome. The protein localises to the cytoplasm. The protein resides in the cytoskeleton. Its subcellular location is the cell membrane. It localises to the nucleus. Common junctional plaque protein. The membrane-associated plaques are architectural elements in an important strategic position to influence the arrangement and function of both the cytoskeleton and the cells within the tissue. The presence of plakoglobin in both the desmosomes and in the intermediate junctions suggests that it plays a central role in the structure and function of submembranous plaques. Acts as a substrate for VE-PTP and is required by it to stimulate VE-cadherin function in endothelial cells. Can replace beta-catenin in E-cadherin/catenin adhesion complexes which are proposed to couple cadherins to the actin cytoskeleton. This Mus musculus (Mouse) protein is Junction plakoglobin.